The following is a 204-amino-acid chain: Urease accessory protein UreG (204 aa).

Residue 11–18 (GPVGAGKT) coordinates GTP.

Belongs to the SIMIBI class G3E GTPase family. UreG subfamily. As to quaternary structure, homodimer. UreD, UreF and UreG form a complex that acts as a GTP-hydrolysis-dependent molecular chaperone, activating the urease apoprotein by helping to assemble the nickel containing metallocenter of UreC. The UreE protein probably delivers the nickel.

It localises to the cytoplasm. Its function is as follows. Facilitates the functional incorporation of the urease nickel metallocenter. This process requires GTP hydrolysis, probably effectuated by UreG. This is Urease accessory protein UreG from Staphylococcus saprophyticus subsp. saprophyticus (strain ATCC 15305 / DSM 20229 / NCIMB 8711 / NCTC 7292 / S-41).